The following is a 357-amino-acid chain: Elongation factor Ts (357 aa).

The involved in Mg(2+) ion dislocation from EF-Tu stretch occupies residues 82–85 (TDFV).

This sequence belongs to the EF-Ts family.

It is found in the cytoplasm. In terms of biological role, associates with the EF-Tu.GDP complex and induces the exchange of GDP to GTP. It remains bound to the aminoacyl-tRNA.EF-Tu.GTP complex up to the GTP hydrolysis stage on the ribosome. In Campylobacter jejuni (strain RM1221), this protein is Elongation factor Ts.